The following is a 147-amino-acid chain: Cyanate hydratase (147 aa).

Residues Arg88, Glu91, and Ser114 contribute to the active site.

It belongs to the cyanase family.

The enzyme catalyses cyanate + hydrogencarbonate + 3 H(+) = NH4(+) + 2 CO2. Functionally, catalyzes the reaction of cyanate with bicarbonate to produce ammonia and carbon dioxide. The chain is Cyanate hydratase from Acaryochloris marina (strain MBIC 11017).